The chain runs to 420 residues: CinA-like protein (420 aa).

This sequence belongs to the CinA family.

This is CinA-like protein from Geotalea uraniireducens (strain Rf4) (Geobacter uraniireducens).